The following is a 206-amino-acid chain: Protein GrpE (206 aa).

Residues 1 to 36 (MTDSNGPKDNNQDQAQAAADPVVSKPYIMPDDPEDG) form a disordered region.

Belongs to the GrpE family. As to quaternary structure, homodimer.

Its subcellular location is the cytoplasm. In terms of biological role, participates actively in the response to hyperosmotic and heat shock by preventing the aggregation of stress-denatured proteins, in association with DnaK and GrpE. It is the nucleotide exchange factor for DnaK and may function as a thermosensor. Unfolded proteins bind initially to DnaJ; upon interaction with the DnaJ-bound protein, DnaK hydrolyzes its bound ATP, resulting in the formation of a stable complex. GrpE releases ADP from DnaK; ATP binding to DnaK triggers the release of the substrate protein, thus completing the reaction cycle. Several rounds of ATP-dependent interactions between DnaJ, DnaK and GrpE are required for fully efficient folding. This is Protein GrpE from Rhodopseudomonas palustris (strain HaA2).